The chain runs to 208 residues: Protein-L-isoaspartate O-methyltransferase (208 aa).

Residue Ser59 is part of the active site.

The protein belongs to the methyltransferase superfamily. L-isoaspartyl/D-aspartyl protein methyltransferase family.

The protein localises to the cytoplasm. The enzyme catalyses [protein]-L-isoaspartate + S-adenosyl-L-methionine = [protein]-L-isoaspartate alpha-methyl ester + S-adenosyl-L-homocysteine. Functionally, catalyzes the methyl esterification of L-isoaspartyl residues in peptides and proteins that result from spontaneous decomposition of normal L-aspartyl and L-asparaginyl residues. It plays a role in the repair and/or degradation of damaged proteins. This chain is Protein-L-isoaspartate O-methyltransferase, found in Aliivibrio fischeri (strain ATCC 700601 / ES114) (Vibrio fischeri).